The primary structure comprises 392 residues: 1-deoxy-D-xylulose 5-phosphate reductoisomerase (392 aa).

The NADPH site is built by T10, G11, S12, I13, and N124. 1-deoxy-D-xylulose 5-phosphate is bound at residue K125. Residue E126 coordinates NADPH. Residue D150 participates in Mn(2+) binding. Positions 151, 152, 180, and 203 each coordinate 1-deoxy-D-xylulose 5-phosphate. Position 152 (E152) interacts with Mn(2+). Residue G209 coordinates NADPH. 1-deoxy-D-xylulose 5-phosphate contacts are provided by S216, N221, K222, and E225. E225 contacts Mn(2+).

This sequence belongs to the DXR family. Requires Mg(2+) as cofactor. Mn(2+) is required as a cofactor.

The catalysed reaction is 2-C-methyl-D-erythritol 4-phosphate + NADP(+) = 1-deoxy-D-xylulose 5-phosphate + NADPH + H(+). Its pathway is isoprenoid biosynthesis; isopentenyl diphosphate biosynthesis via DXP pathway; isopentenyl diphosphate from 1-deoxy-D-xylulose 5-phosphate: step 1/6. Catalyzes the NADPH-dependent rearrangement and reduction of 1-deoxy-D-xylulose-5-phosphate (DXP) to 2-C-methyl-D-erythritol 4-phosphate (MEP). The chain is 1-deoxy-D-xylulose 5-phosphate reductoisomerase from Saccharophagus degradans (strain 2-40 / ATCC 43961 / DSM 17024).